The primary structure comprises 437 residues: Chromosomal replication initiator protein DnaA (437 aa).

The segment at 1–67 (MKNKIIASLK…KVVKDILGKD (67 aa)) is domain I, interacts with DnaA modulators. Residues 67-97 (DATYEITFKEIPYETKVESGPLIKKRPLLIT) are domain II. The interval 98 to 313 (PLNPKYTFEN…GAILRLIAYR (216 aa)) is domain III, AAA+ region. The ATP site is built by Gly141, Gly143, Lys144, and Thr145. A domain IV, binds dsDNA region spans residues 314 to 437 (NLYGTLNLSI…SKGFAQGESM (124 aa)).

Belongs to the DnaA family. As to quaternary structure, oligomerizes as a right-handed, spiral filament on DNA at oriC.

Its subcellular location is the cytoplasm. Functionally, plays an essential role in the initiation and regulation of chromosomal replication. ATP-DnaA binds to the origin of replication (oriC) to initiate formation of the DNA replication initiation complex once per cell cycle. Binds the DnaA box (a 9 base pair repeat at the origin) and separates the double-stranded (ds)DNA. Forms a right-handed helical filament on oriC DNA; dsDNA binds to the exterior of the filament while single-stranded (ss)DNA is stabiized in the filament's interior. The ATP-DnaA-oriC complex binds and stabilizes one strand of the AT-rich DNA unwinding element (DUE), permitting loading of DNA polymerase. After initiation quickly degrades to an ADP-DnaA complex that is not apt for DNA replication. Binds acidic phospholipids. This is Chromosomal replication initiator protein DnaA from Thermosipho melanesiensis (strain DSM 12029 / CIP 104789 / BI429).